We begin with the raw amino-acid sequence, 178 residues long: Bifunctional protein PyrR (178 aa).

Substrate contacts are provided by residues 42 to 43, R83, 103 to 111, R136, and V160; these read TR and DDVIYKGRT. Residues 99-111 carry the PRPP-binding motif; that stretch reads VVLVDDVIYKGRT.

The protein belongs to the purine/pyrimidine phosphoribosyltransferase family. PyrR subfamily.

It catalyses the reaction UMP + diphosphate = 5-phospho-alpha-D-ribose 1-diphosphate + uracil. Functionally, regulates the transcription of the pyrimidine nucleotide (pyr) operon in response to exogenous pyrimidines. Its function is as follows. Also displays a weak uracil phosphoribosyltransferase activity which is not physiologically significant. The polypeptide is Bifunctional protein PyrR (Synechocystis sp. (strain ATCC 27184 / PCC 6803 / Kazusa)).